Here is a 207-residue protein sequence, read N- to C-terminus: Small ribosomal subunit protein eS1 (207 aa).

It belongs to the eukaryotic ribosomal protein eS1 family.

The polypeptide is Small ribosomal subunit protein eS1 (Methanosarcina barkeri (strain Fusaro / DSM 804)).